The primary structure comprises 689 residues: Dipeptidyl aminopeptidase BIII (689 aa).

The N-terminal stretch at 1 to 26 (MRHPAFRLTLLASTVAFALAPQAAQA) is a signal peptide. Active-site charge relay system residues include S506, D593, and H625.

It belongs to the peptidase S9C family. Monomer.

With respect to regulation, strongly inhibited by the serine protease inhibitor diisopropyl fluorophosphate (DFP), chymostatin, leupeptin, 0.5 mM ZnCl(2), 10 mM o-phenanthlorine and N-tosyl-L-phenyl-alanyl chloromethyl ketone (TPCK), but not by N-tosyl-L-lysyl chloromethyl ketone (TLCK). Activity is not affected significantly by iodoacetate (IAA), L-trans-epoxysuccinyl-leucylamido(4-guanido)butane (E64), pepstatin A and phenylmethanesulfonyl fluoride (PMSF). Activity is stimulated by addition of 0.5 mM CaCl(2), 10 mM EDTA and N-ethylmaleimide (NEM). Its function is as follows. Exopeptidase that catalyzes the removal of dipeptide units (NH2-P2-P1- or -P1'-P2'-COOH) from the free amino or carboxy termini. Prefers substrates composed of bulky, hydrophobic amino acids at P1 and P1' positions. Has endopeptidase activity on N-terminally blocked peptide derivatives which contain aromatic amino acid residue at the P1 position. Exopeptidase activity is much higher than its endopeptidase activity. This is Dipeptidyl aminopeptidase BIII from Pseudoxanthomonas mexicana.